We begin with the raw amino-acid sequence, 235 residues long: Probable septum site-determining protein MinC (235 aa).

A disordered region spans residues lysine 104–proline 125. Residues proline 110–proline 119 are compositionally biased toward pro residues.

Belongs to the MinC family. In terms of assembly, interacts with MinD and FtsZ.

Cell division inhibitor that blocks the formation of polar Z ring septums. Rapidly oscillates between the poles of the cell to destabilize FtsZ filaments that have formed before they mature into polar Z rings. Prevents FtsZ polymerization. This chain is Probable septum site-determining protein MinC, found in Salmonella enteritidis PT4 (strain P125109).